A 2486-amino-acid polypeptide reads, in one-letter code: Nonribosomal peptide synthetase nanA (2486 aa).

Residues 231-637 (FSARQPLSPA…GRRGTQVKLR (407 aa)) are adenylation 1. One can recognise a Carrier 1 domain in the interval 786-860 (TDIELKVHAL…DLARSAKETS (75 aa)). Position 820 is an O-(pantetheine 4'-phosphoryl)serine (S820). Residues 902-1314 (EDAYPCTPLQ…LKSVPRVSSQ (413 aa)) form a condensation 1 region. The adenylation 2 stretch occupies residues 1339-1735 (RAQARKTPLA…GRIGDQMKIR (397 aa)). Carrier domains lie at 1872–1948 (PPST…SSAS) and 2404–2480 (SSSE…QTQA). Residues S1909 and S2441 each carry the O-(pantetheine 4'-phosphoryl)serine modification. The segment at 2404 to 2480 (SSSETIVEPL…KLARLLQTQA (77 aa)) is condensation 2.

It belongs to the NRP synthetase family.

Its pathway is secondary metabolite biosynthesis. Nonribosomal peptide synthetase; part of the gene cluster that mediates the biosynthesis of the benzazepine alkaloid nanangelenin A which contains an unprecedented 3,4-dihydro-1-benzazepine-2,5-dione-N-prenyl-N-acetoxy-anthranilamide scaffold. The first step of nanangelenin biosynthesis is catalyzed by the indoleamine 2,3-dioxygenase nanC which produces N-formyl-kynurenine through the catabolism of tryptophan. The two-module NRPS nanA then utilizes anthranilate (Ant) and L-kynurenine (L-Kyn) to assemble the dipeptide product nanangelenin B. The first adenylation domain of nanA (A1) loads anthranilate onto the T1 domain, while A2 loads kynurenine, generated through spontaneous nonenzymatic deformylation of the nanC-supplied N-formyl-kynurenine. The peptide bond formation between the tethered amino acids is catalyzed by the first condensation domain (C1) between anthranilate's carbonyl carbon and kynurenine's aliphatic primary amine. The second C domain (C2) catalyzes the final cyclization event between the aromatic amine of kynurenine and the tethered carbonyl carbon, yielding nanangelenin B. The terminal T3 domain enhances the catalytic efficiency of C2, suggesting the T2-tethered Ant-L-Kyn is transferred to T3 prior to cyclization by C2. Once released from nanA, nanangelenin B is then prenylated by the prenyltransferase nanD to form nanangelenin C. Nanangelenin C is then N-hydroxylated by the FAD-dependent monooxygenase nanF and further acetylated by the acetyltransferase nanB to yield nanangelenin F. Finally, the N-methyltransferase nanE methylates the amide nitrogen of 1-benzazepine to convert nanangelenin F into nanangelenin A. NanE is also able to methylate most of the intermediates of the pathway such as nanangelenin B and nanangelenin C to produce nanangelenin D and nanangelenin E, respectively. The polypeptide is Nonribosomal peptide synthetase nanA (Aspergillus nanangensis).